The following is a 288-amino-acid chain: Lipoyl synthase (288 aa).

[4Fe-4S] cluster is bound by residues cysteine 39, cysteine 44, cysteine 50, cysteine 65, cysteine 69, cysteine 72, and serine 276. Residues 51 to 265 enclose the Radical SAM core domain; that stretch reads WGKGTATFMI…KETGLKKGFE (215 aa).

It belongs to the radical SAM superfamily. Lipoyl synthase family. Requires [4Fe-4S] cluster as cofactor.

Its subcellular location is the cytoplasm. It catalyses the reaction [[Fe-S] cluster scaffold protein carrying a second [4Fe-4S](2+) cluster] + N(6)-octanoyl-L-lysyl-[protein] + 2 oxidized [2Fe-2S]-[ferredoxin] + 2 S-adenosyl-L-methionine + 4 H(+) = [[Fe-S] cluster scaffold protein] + N(6)-[(R)-dihydrolipoyl]-L-lysyl-[protein] + 4 Fe(3+) + 2 hydrogen sulfide + 2 5'-deoxyadenosine + 2 L-methionine + 2 reduced [2Fe-2S]-[ferredoxin]. The protein operates within protein modification; protein lipoylation via endogenous pathway; protein N(6)-(lipoyl)lysine from octanoyl-[acyl-carrier-protein]: step 2/2. Functionally, catalyzes the radical-mediated insertion of two sulfur atoms into the C-6 and C-8 positions of the octanoyl moiety bound to the lipoyl domains of lipoate-dependent enzymes, thereby converting the octanoylated domains into lipoylated derivatives. This Bacteroides fragilis (strain YCH46) protein is Lipoyl synthase.